A 586-amino-acid polypeptide reads, in one-letter code: BTB/POZ domain and ankyrin repeat-containing protein NPR1 (586 aa).

Residues S63 to P139 form the BTB domain. The C2HC NPR-type zinc-finger motif lies at V142 to R156. Positions 145, 150, 152, and 155 each coordinate Zn(2+). ANK repeat units lie at residues K266–E296, N298–L325, and R329–E358. The tract at residues E388–P522 is salicylic acid-binding core (SBC). Residue R433 participates in salicylate binding. The disordered stretch occupies residues N561–P586. Residues L562 to S573 are compositionally biased toward low complexity.

The protein belongs to the plant 'ANKYRIN-BTB/POZ' family. 'NPR1-like' subfamily. In terms of tissue distribution, highly expressed in leaves. Expressed at low levels in roots and stems.

It is found in the cytoplasm. It localises to the nucleus. The protein localises to the nuclear body. The protein operates within protein modification; protein ubiquitination. Functionally, salicylic acid (SA)-binding substrate-specific adapter of an E3 ubiquitin-protein ligase complex (CUL3-RBX1-BTB) which mediates the ubiquitination and subsequent proteasomal degradation of target proteins. Transcription cofactor that represses gene expression in the absence of salicylic acid (SA), when attached to negative cis-elements (W-box) with WRKY transcription factors, but stimulates gene expression upon activation by SA, when sumoylated and attached to positive cis-elements (as-1) with TGA transcription factors, thus confering immunity through a series of gene regulations ending in a significant increase in antimicrobial and defense genes expression. Probable component of the salicylic acid (SA) defense signaling pathway and pathogen-induced systemic acquired resistance (SAR). May be involved in disease resistance against fungal pathogens. May be involved in tolerance to salt and osmotic stresses. In Malus hupehensis (Chinese crab apple), this protein is BTB/POZ domain and ankyrin repeat-containing protein NPR1.